Consider the following 656-residue polypeptide: Choline transporter-like protein 3 (656 aa).

A helical membrane pass occupies residues 37 to 57 (WLVLFFLFWTGLVFIMGYSVV). Residues N141 and N154 are each glycosylated (N-linked (GlcNAc...) asparagine). 5 helical membrane passes run 216–236 (DTIL…LFAF), 242–262 (LLIH…CGVL), 288–308 (LAFA…IFTL), 337–357 (LWTC…LLSL), and 381–401 (YMWW…LACQ). Residues N506 and N524 are each glycosylated (N-linked (GlcNAc...) asparagine). A helical transmembrane segment spans residues 537-557 (FVIFLGKVLVVCFSIFGGLMA). N-linked (GlcNAc...) asparagine glycosylation is present at N559. Residues 566-586 (VWAIPLLLVAFFACVVAHSFL) form a helical membrane-spanning segment. Residues 634–656 (AKSQGQKDALPNEEGTELQPIVR) are disordered.

Belongs to the CTL (choline transporter-like) family.

The protein localises to the membrane. The polypeptide is Choline transporter-like protein 3 (Slc44a3) (Mus musculus (Mouse)).